Consider the following 123-residue polypeptide: Ribonuclease P protein component (123 aa).

It belongs to the RnpA family. Consists of a catalytic RNA component (M1 or rnpB) and a protein subunit.

It carries out the reaction Endonucleolytic cleavage of RNA, removing 5'-extranucleotides from tRNA precursor.. In terms of biological role, RNaseP catalyzes the removal of the 5'-leader sequence from pre-tRNA to produce the mature 5'-terminus. It can also cleave other RNA substrates such as 4.5S RNA. The protein component plays an auxiliary but essential role in vivo by binding to the 5'-leader sequence and broadening the substrate specificity of the ribozyme. The sequence is that of Ribonuclease P protein component from Streptomyces griseus subsp. griseus (strain JCM 4626 / CBS 651.72 / NBRC 13350 / KCC S-0626 / ISP 5235).